Here is a 484-residue protein sequence, read N- to C-terminus: RxLR effector protein PexRD18 (484 aa).

Residues 1 to 20 form the signal peptide; the sequence is MSHQRILLLLMAAFFAWVSA. A RxLR-dEER motif is present at residues 55 to 79; sequence RFLRLYDAEVRDTVRGDNDVDREER.

This sequence belongs to the RxLR effector family.

The protein localises to the secreted. It localises to the host cell membrane. Effector that enhances P.infestans colonization of Nicotiana benthamiana leaves. The polypeptide is RxLR effector protein PexRD18 (Phytophthora infestans (strain T30-4) (Potato late blight agent)).